The sequence spans 192 residues: uncharacterized protein (192 aa).

Residues 29–160 (HRQAAVLIPI…PLDIYRRGDS (132 aa)) enclose the Nudix hydrolase domain. Residues 67-89 (GAVDDTDASVIAAALREAEEEVA) carry the Nudix box motif. Mg(2+) contacts are provided by Glu-83 and Glu-87.

Belongs to the Nudix hydrolase family. PCD1 subfamily. It depends on Mn(2+) as a cofactor. Mg(2+) serves as cofactor.

Functionally, probably mediates the hydrolysis of some nucleoside diphosphate derivatives. This is an uncharacterized protein from Escherichia coli (strain SMS-3-5 / SECEC).